The sequence spans 165 residues: Nucleotide-binding protein RoseRS_0530 (165 aa).

The protein belongs to the YajQ family.

In terms of biological role, nucleotide-binding protein. This Roseiflexus sp. (strain RS-1) protein is Nucleotide-binding protein RoseRS_0530.